An 874-amino-acid polypeptide reads, in one-letter code: Alanine--tRNA ligase (874 aa).

Positions 562, 566, 664, and 668 each coordinate Zn(2+).

It belongs to the class-II aminoacyl-tRNA synthetase family. It depends on Zn(2+) as a cofactor.

The protein localises to the cytoplasm. The catalysed reaction is tRNA(Ala) + L-alanine + ATP = L-alanyl-tRNA(Ala) + AMP + diphosphate. Its function is as follows. Catalyzes the attachment of alanine to tRNA(Ala) in a two-step reaction: alanine is first activated by ATP to form Ala-AMP and then transferred to the acceptor end of tRNA(Ala). Also edits incorrectly charged Ser-tRNA(Ala) and Gly-tRNA(Ala) via its editing domain. The polypeptide is Alanine--tRNA ligase (Shewanella halifaxensis (strain HAW-EB4)).